A 310-amino-acid polypeptide reads, in one-letter code: Olfactory receptor 5P52 (310 aa).

The Extracellular portion of the chain corresponds to 1–25; it reads MEAENHTTVAELIILGLTEDPKLCI. Residue Asn-5 is glycosylated (N-linked (GlcNAc...) asparagine). The chain crosses the membrane as a helical span at residues 26–46; the sequence is VFFVIFLGVYIITLVGNISII. The Cytoplasmic portion of the chain corresponds to 47–54; the sequence is TLIRISSQ. A helical transmembrane segment spans residues 55–75; sequence LHTPMYLFLSHLAFVDIVFST. Over 76-99 the chain is Extracellular; that stretch reads SVSVIMLMELLGHGLVLSVATCAA. Cys-97 and Cys-189 are disulfide-bonded. Residues 100-120 form a helical membrane-spanning segment; it reads QLCMTVSFGSAECFLLAAMAY. The Cytoplasmic portion of the chain corresponds to 121–133; sequence DRYVAICSPLLYS. The helical transmembrane segment at 134 to 154 threads the bilayer; the sequence is TLMSSRVCFLLLGISYVGGFV. Residues 155–196 are Extracellular-facing; it reads NGWTFTGCVLSLSFCGPTQINHFFCDFSPLLKVSCSDVSIIG. A helical transmembrane segment spans residues 197-217; it reads IIPSISSGSIIVVTVFVIAVS. Topologically, residues 218–237 are cytoplasmic; that stretch reads YIYILITILKMRSTEGRHKA. The chain crosses the membrane as a helical span at residues 238–258; sequence FSTCTSHLTAVTLFYGTITVI. The Extracellular segment spans residues 259–271; sequence YVMPKSSYSTEQN. Residues 272–292 traverse the membrane as a helical segment; it reads KVISLFYTVVIPMLNPLIYSL. Residues 293–310 lie on the Cytoplasmic side of the membrane; the sequence is RNRDVKDALRKAIVRVYS.

It belongs to the G-protein coupled receptor 1 family.

Its subcellular location is the cell membrane. Potential odorant receptor. The protein is Olfactory receptor 5P52 of Mus musculus (Mouse).